Consider the following 267-residue polypeptide: Digeranylgeranylglyceryl phosphate synthase (267 aa).

The next 7 helical transmembrane spans lie at 10–30 (ANCV…GALL), 33–53 (LHTP…GNAI), 80–100 (AALI…GLIN), 104–121 (LALA…AARL), 139–159 (TFLF…LSIL), 198–218 (VLAS…PLGI), and 247–267 (QRWI…GYHI).

This sequence belongs to the UbiA prenyltransferase family. DGGGP synthase subfamily. The cofactor is Mg(2+).

Its subcellular location is the cell membrane. The enzyme catalyses sn-3-O-(geranylgeranyl)glycerol 1-phosphate + (2E,6E,10E)-geranylgeranyl diphosphate = 2,3-bis-O-(geranylgeranyl)-sn-glycerol 1-phosphate + diphosphate. It participates in membrane lipid metabolism; glycerophospholipid metabolism. Its function is as follows. Prenyltransferase that catalyzes the transfer of the geranylgeranyl moiety of geranylgeranyl diphosphate (GGPP) to the C2 hydroxyl of (S)-3-O-geranylgeranylglyceryl phosphate (GGGP). This reaction is the second ether-bond-formation step in the biosynthesis of archaeal membrane lipids. The polypeptide is Digeranylgeranylglyceryl phosphate synthase (Methanothrix thermoacetophila (strain DSM 6194 / JCM 14653 / NBRC 101360 / PT) (Methanosaeta thermophila)).